A 512-amino-acid polypeptide reads, in one-letter code: Serine--tRNA ligase, cytoplasmic (512 aa).

Methionine 1 carries the N-acetylmethionine modification. An interaction with tRNA region spans residues 9–61 (RVDKGGDPALIRETQEKRFKDPGLVDQLVKADSEWRRCRFRADNLNKLKNLCS). Residue serine 241 is modified to Phosphoserine. Residues threonine 271 and arginine 302 each coordinate L-serine. Residues 302–304 (RQE) and 318–321 (VHQF) each bind ATP. Lysine 323 is modified (N6-acetyllysine). Glutamate 325 is an L-serine binding site. Residue 391–394 (ELVS) participates in ATP binding. Asparagine 427 provides a ligand contact to L-serine. The interval 472–512 (KPAPIDQEPSKKQKKQHEGSKKKAKEVTLENQLQNMEVTEA) is disordered. The span at 479 to 499 (EPSKKQKKQHEGSKKKAKEVT) shows a compositional bias: basic and acidic residues. Residues 482 to 494 (KKQKKQHEGSKKK) carry the Nuclear localization signal motif. Polar residues predominate over residues 500 to 512 (LENQLQNMEVTEA).

The protein belongs to the class-II aminoacyl-tRNA synthetase family. Type-1 seryl-tRNA synthetase subfamily. As to quaternary structure, homodimer. The tRNA molecule may bind across the dimer. Interacts with SIRT2. Interacts with METTL6; interaction is required for the tRNA N(3)-methylcytidine methyltransferase activity of METTL6.

Its subcellular location is the cytoplasm. The protein resides in the nucleus. The catalysed reaction is tRNA(Ser) + L-serine + ATP = L-seryl-tRNA(Ser) + AMP + diphosphate + H(+). The enzyme catalyses tRNA(Sec) + L-serine + ATP = L-seryl-tRNA(Sec) + AMP + diphosphate + H(+). It participates in aminoacyl-tRNA biosynthesis; selenocysteinyl-tRNA(Sec) biosynthesis; L-seryl-tRNA(Sec) from L-serine and tRNA(Sec): step 1/1. Its function is as follows. Catalyzes the attachment of serine to tRNA(Ser) in a two-step reaction: serine is first activated by ATP to form Ser-AMP and then transferred to the acceptor end of tRNA(Ser). Is probably also able to aminoacylate tRNA(Sec) with serine, to form the misacylated tRNA L-seryl-tRNA(Sec), which will be further converted into selenocysteinyl-tRNA(Sec). In the nucleus, binds to the VEGFA core promoter and prevents MYC binding and transcriptional activation by MYC. Recruits SIRT2 to the VEGFA promoter, promoting deacetylation of histone H4 at 'Lys-16' (H4K16). Thereby, inhibits the production of VEGFA and sprouting angiogenesis mediated by VEGFA. This chain is Serine--tRNA ligase, cytoplasmic (Sars1), found in Rattus norvegicus (Rat).